The sequence spans 106 residues: Iron-sulfur cluster assembly protein CyaY (106 aa).

Belongs to the frataxin family.

Its function is as follows. Involved in iron-sulfur (Fe-S) cluster assembly. May act as a regulator of Fe-S biogenesis. This chain is Iron-sulfur cluster assembly protein CyaY, found in Escherichia fergusonii (strain ATCC 35469 / DSM 13698 / CCUG 18766 / IAM 14443 / JCM 21226 / LMG 7866 / NBRC 102419 / NCTC 12128 / CDC 0568-73).